A 251-amino-acid chain; its full sequence is Pantothenate synthetase (251 aa).

An ATP-binding site is contributed by 28–35 (MGALHTGH). Catalysis depends on histidine 35, which acts as the Proton donor. Glutamine 59 lines the (R)-pantoate pocket. Residue glutamine 59 coordinates beta-alanine. Residue 145 to 148 (GEKD) coordinates ATP. A (R)-pantoate-binding site is contributed by glutamine 151. Residues valine 174 and 182-185 (KSSR) contribute to the ATP site.

Belongs to the pantothenate synthetase family. Homodimer.

The protein resides in the cytoplasm. The enzyme catalyses (R)-pantoate + beta-alanine + ATP = (R)-pantothenate + AMP + diphosphate + H(+). Its pathway is cofactor biosynthesis; (R)-pantothenate biosynthesis; (R)-pantothenate from (R)-pantoate and beta-alanine: step 1/1. In terms of biological role, catalyzes the condensation of pantoate with beta-alanine in an ATP-dependent reaction via a pantoyl-adenylate intermediate. This Bdellovibrio bacteriovorus (strain ATCC 15356 / DSM 50701 / NCIMB 9529 / HD100) protein is Pantothenate synthetase.